A 442-amino-acid chain; its full sequence is tRNA(Ile)-lysidine synthase (442 aa).

S27–S32 contacts ATP.

It belongs to the tRNA(Ile)-lysidine synthase family.

The protein resides in the cytoplasm. The catalysed reaction is cytidine(34) in tRNA(Ile2) + L-lysine + ATP = lysidine(34) in tRNA(Ile2) + AMP + diphosphate + H(+). Ligates lysine onto the cytidine present at position 34 of the AUA codon-specific tRNA(Ile) that contains the anticodon CAU, in an ATP-dependent manner. Cytidine is converted to lysidine, thus changing the amino acid specificity of the tRNA from methionine to isoleucine. This is tRNA(Ile)-lysidine synthase from Photorhabdus laumondii subsp. laumondii (strain DSM 15139 / CIP 105565 / TT01) (Photorhabdus luminescens subsp. laumondii).